The sequence spans 130 residues: Small ribosomal subunit protein uS9 (130 aa).

The protein belongs to the universal ribosomal protein uS9 family.

The polypeptide is Small ribosomal subunit protein uS9 (Histophilus somni (strain 129Pt) (Haemophilus somnus)).